A 638-amino-acid chain; its full sequence is Homeobox protein 10 (638 aa).

3 disordered regions span residues E23–N55, T76–N139, and I195–K219. 2 stretches are compositionally biased toward low complexity: residues T24–N55 and N80–N139. Polar residues predominate over residues E205–G214. The segment at residues N301–G360 is a DNA-binding region (homeobox). Disordered regions lie at residues E381–D431 and S448–N638. 3 stretches are compositionally biased toward low complexity: residues S388 to G411, L419 to S430, and N462 to T501. Composition is skewed to polar residues over residues S502–T522 and S545–Q573. Residues N575 to D625 are compositionally biased toward low complexity.

The protein resides in the nucleus. Its function is as follows. Putative transcription factor. The polypeptide is Homeobox protein 10 (hbx10) (Dictyostelium discoideum (Social amoeba)).